The chain runs to 311 residues: Methionyl-tRNA formyltransferase (311 aa).

Residue 110–113 (SLLP) participates in (6S)-5,6,7,8-tetrahydrofolate binding.

The protein belongs to the Fmt family.

The enzyme catalyses L-methionyl-tRNA(fMet) + (6R)-10-formyltetrahydrofolate = N-formyl-L-methionyl-tRNA(fMet) + (6S)-5,6,7,8-tetrahydrofolate + H(+). Functionally, attaches a formyl group to the free amino group of methionyl-tRNA(fMet). The formyl group appears to play a dual role in the initiator identity of N-formylmethionyl-tRNA by promoting its recognition by IF2 and preventing the misappropriation of this tRNA by the elongation apparatus. This Streptococcus pyogenes serotype M49 (strain NZ131) protein is Methionyl-tRNA formyltransferase.